A 454-amino-acid polypeptide reads, in one-letter code: C4-dicarboxylate transport protein (454 aa).

The next 9 membrane-spanning stretches (helical) occupy residues 33-53, 66-86, 101-121, 148-168, 170-190, 210-230, 243-263, 354-374, and 377-397; these read VQVL…PDIG, LVKM…IAGM, IYFL…ANLV, EQSI…GAFA, GDIL…AIVG, LVAI…AFTI, MLIG…LGAV, LLLV…AGFI, and AATL…ILGI.

The protein belongs to the dicarboxylate/amino acid:cation symporter (DAACS) (TC 2.A.23) family.

Its subcellular location is the cell inner membrane. Its function is as follows. Responsible for the transport of dicarboxylates such as succinate, fumarate, and malate from the periplasm across the membrane. The protein is C4-dicarboxylate transport protein of Sinorhizobium medicae (strain WSM419) (Ensifer medicae).